The chain runs to 50 residues: Bacteriocin BacSp222 (50 aa).

The residue at position 1 (M1) is an N-formylmethionine.

It localises to the secreted. In terms of biological role, has bacteriolytic activity against Gram-positive bacteria B.subtilis, L.lactis and M.luteus and several species from genus Staphylococcus including methicillin-resistant S.aureus, with MIC values ranging from 0.11 uM to 7.8 uM. Has no activity against Gram-negative bacteria or fungi. In vitro, has a dose-dependent cytolytic effect on eukaryotic cells. This is Bacteriocin BacSp222 from Staphylococcus pseudintermedius.